The chain runs to 657 residues: Methionine--tRNA ligase (657 aa).

Positions Tyr-13 to His-23 match the 'HIGH' region motif. The 'KMSKS' region motif lies at Lys-308–Ser-312. Lys-311 serves as a coordination point for ATP. The 101-residue stretch at Asp-557 to Lys-657 folds into the tRNA-binding domain.

Belongs to the class-I aminoacyl-tRNA synthetase family. MetG type 2B subfamily. As to quaternary structure, homodimer.

It is found in the cytoplasm. It catalyses the reaction tRNA(Met) + L-methionine + ATP = L-methionyl-tRNA(Met) + AMP + diphosphate. Is required not only for elongation of protein synthesis but also for the initiation of all mRNA translation through initiator tRNA(fMet) aminoacylation. This Staphylococcus aureus (strain MW2) protein is Methionine--tRNA ligase.